The primary structure comprises 396 residues: Vitamin K-dependent protein Z (396 aa).

In terms of domain architecture, Gla spans 1–46 (AGSYLLEELFEGHLEKECWEEICVYEEAREVFEDDETTDEFWRTYM). 4-carboxyglutamate is present on residues Glu-7, Glu-8, Glu-11, Glu-15, Glu-17, Glu-20, Glu-21, Glu-26, Glu-27, Glu-30, Glu-33, Glu-36, and Glu-40. The cysteines at positions 18 and 23 are disulfide-linked. 2 EGF-like domains span residues 47–83 (GGSPCASQPCLNNGSCQDSIRGYACTCAPGYEGPNCA) and 85–126 (AESE…RSCL). Cystine bridges form between Cys-51–Cys-62, Cys-56–Cys-71, Cys-73–Cys-82, Cys-89–Cys-101, Cys-97–Cys-110, Cys-112–Cys-125, and Cys-169–Cys-185. O-linked (Glc...) serine glycosylation occurs at Ser-53. Asn-59 carries an N-linked (GlcNAc...) asparagine glycan. At Asp-64 the chain carries (3R)-3-hydroxyaspartate. The Peptidase S1 domain maps to 135–357 (TLGPECCQRP…YALWLRQVTQ (223 aa)). Residues Asn-191 and Asn-289 are each glycosylated (N-linked (GlcNAc...) asparagine). A disulfide bond links Cys-284 and Cys-298. The segment at 356-396 (TQQPSRASPRGDRGQGRDGEPVPGDRGGRWAPTALPPGPLV) is disordered. A compositionally biased stretch (basic and acidic residues) spans 364–375 (PRGDRGQGRDGE). An O-linked (GalNAc...) threonine glycan is attached at Thr-388.

Belongs to the peptidase S1 family. The iron and 2-oxoglutarate dependent 3-hydroxylation of aspartate and asparagine is (R) stereospecific within EGF domains. As to expression, plasma.

The protein localises to the secreted. Functionally, inhibits activity of the coagulation protease factor Xa in the presence of SERPINA10, calcium and phospholipids. Appears to assist hemostasis by binding thrombin and promoting its association with phospholipid vesicles. The protein is Vitamin K-dependent protein Z (PROZ) of Bos taurus (Bovine).